The sequence spans 318 residues: Acetyl-coenzyme A carboxylase carboxyl transferase subunit alpha (318 aa).

The region spanning 36–293 (EIDRLKEKST…KTRLSEQLDQ (258 aa)) is the CoA carboxyltransferase C-terminal domain.

It belongs to the AccA family. In terms of assembly, acetyl-CoA carboxylase is a heterohexamer composed of biotin carboxyl carrier protein (AccB), biotin carboxylase (AccC) and two subunits each of ACCase subunit alpha (AccA) and ACCase subunit beta (AccD).

It localises to the cytoplasm. It catalyses the reaction N(6)-carboxybiotinyl-L-lysyl-[protein] + acetyl-CoA = N(6)-biotinyl-L-lysyl-[protein] + malonyl-CoA. It functions in the pathway lipid metabolism; malonyl-CoA biosynthesis; malonyl-CoA from acetyl-CoA: step 1/1. Functionally, component of the acetyl coenzyme A carboxylase (ACC) complex. First, biotin carboxylase catalyzes the carboxylation of biotin on its carrier protein (BCCP) and then the CO(2) group is transferred by the carboxyltransferase to acetyl-CoA to form malonyl-CoA. The polypeptide is Acetyl-coenzyme A carboxylase carboxyl transferase subunit alpha (Teredinibacter turnerae (strain ATCC 39867 / T7901)).